Consider the following 529-residue polypeptide: Peptide chain release factor 3 (529 aa).

In terms of domain architecture, tr-type G spans 10-279; sequence EQRRCFGIIS…ALVEMAPAPG (270 aa). GTP contacts are provided by residues 19 to 26, 87 to 91, and 141 to 144; these read SHPDAGKT, DTPGH, and NKMD.

It belongs to the TRAFAC class translation factor GTPase superfamily. Classic translation factor GTPase family. PrfC subfamily.

It is found in the cytoplasm. Increases the formation of ribosomal termination complexes and stimulates activities of RF-1 and RF-2. It binds guanine nucleotides and has strong preference for UGA stop codons. It may interact directly with the ribosome. The stimulation of RF-1 and RF-2 is significantly reduced by GTP and GDP, but not by GMP. This Desulfatibacillum aliphaticivorans protein is Peptide chain release factor 3.